A 267-amino-acid chain; its full sequence is Eukaryotic translation initiation factor 3 subunit J (267 aa).

Disordered regions lie at residues 1 to 128 and 220 to 241; these read MAPS…DIDL and KMRE…KTKV. Residues 28 to 46 are compositionally biased toward acidic residues; sequence DEEEEDVLDSWDAAEDSEV. The stretch at 44–96 forms a coiled coil; the sequence is SEVEREKAAKAAAAAAKAEAEAAAKKKSKAQRIEEHKQERKKQAEANESDEDS. Over residues 74–88 the composition is skewed to basic and acidic residues; sequence QRIEEHKQERKKQAE. Acidic residues predominate over residues 90–100; sequence NESDEDSDEDE. Basic and acidic residues-rich tracts occupy residues 108 to 121 and 220 to 231; these read RRTE…HAQD and KMREERAADKGN.

Belongs to the eIF-3 subunit J family. As to quaternary structure, component of the eukaryotic translation initiation factor 3 (eIF-3) complex.

It localises to the cytoplasm. Its function is as follows. Component of the eukaryotic translation initiation factor 3 (eIF-3) complex, which is involved in protein synthesis of a specialized repertoire of mRNAs and, together with other initiation factors, stimulates binding of mRNA and methionyl-tRNAi to the 40S ribosome. The eIF-3 complex specifically targets and initiates translation of a subset of mRNAs involved in cell proliferation. The protein is Eukaryotic translation initiation factor 3 subunit J (hcr1) of Neosartorya fischeri (strain ATCC 1020 / DSM 3700 / CBS 544.65 / FGSC A1164 / JCM 1740 / NRRL 181 / WB 181) (Aspergillus fischerianus).